Reading from the N-terminus, the 165-residue chain is Transcription elongation factor A protein-like 1 (165 aa).

The tract at residues 1–101 (MENTRSENEE…EQPPCGVGKH (101 aa)) is disordered. Positions 33–60 (CSEEDQSSEDLSSEEQSSEEEFFPEELL) are enriched in acidic residues.

It belongs to the TFS-II family. TFA subfamily.

The protein resides in the nucleus. In terms of biological role, may be involved in transcriptional regulation. Modulates various viral and cellular promoters in a promoter context-dependent manner. Does not bind DNA directly. In Mus musculus (Mouse), this protein is Transcription elongation factor A protein-like 1.